A 315-amino-acid polypeptide reads, in one-letter code: Replication factor C small subunit (315 aa).

Position 43–50 (43–50) interacts with ATP; it reads GSPGVGKT.

The protein belongs to the activator 1 small subunits family. RfcS subfamily. As to quaternary structure, heteromultimer composed of small subunits (RfcS) and large subunits (RfcL).

Part of the RFC clamp loader complex which loads the PCNA sliding clamp onto DNA. The sequence is that of Replication factor C small subunit from Methanococcus maripaludis (strain C5 / ATCC BAA-1333).